The following is a 315-amino-acid chain: Probable carboxylesterase 3 (315 aa).

Residue Met-1 is modified to N-acetylmethionine. The Involved in the stabilization of the negatively charged intermediate by the formation of the oxyanion hole motif lies at 81 to 83 (HGG). Residues Ser-160, Asp-258, and His-290 contribute to the active site.

It belongs to the 'GDXG' lipolytic enzyme family. Expressed in flowers and siliques.

It carries out the reaction a carboxylic ester + H2O = an alcohol + a carboxylate + H(+). In terms of biological role, carboxylesterase acting on esters with varying acyl chain length. The sequence is that of Probable carboxylesterase 3 (CXE3) from Arabidopsis thaliana (Mouse-ear cress).